A 439-amino-acid polypeptide reads, in one-letter code: Enolase (439 aa).

Residues histidine 160 and glutamate 169 each contribute to the substrate site. The active-site Proton donor is the glutamate 212. Mg(2+)-binding residues include aspartate 247, glutamate 296, and aspartate 323. Substrate contacts are provided by glutamate 296 and aspartate 323. The Proton acceptor role is filled by lysine 348. Substrate contacts are provided by residues 375–378 and lysine 399; that span reads SHRS.

The protein belongs to the enolase family. In terms of assembly, homodimer. Mg(2+) serves as cofactor.

The protein localises to the cytoplasm. The catalysed reaction is (2R)-2-phosphoglycerate = phosphoenolpyruvate + H2O. Its pathway is carbohydrate degradation; glycolysis; pyruvate from D-glyceraldehyde 3-phosphate: step 4/5. The sequence is that of Enolase (ENO) from Rhodotorula mucilaginosa (Yeast).